An 820-amino-acid chain; its full sequence is MADRAMTRVHSVRERLTDTLSAHKNELLALFSRFVKQGQGMLQPHQLLTEYEAVIPAADREKLKDGVFEDVLKAAQEAIVIPPWVALAIRPRPGVWEYVRVNVSELAVEELTVPEYLQFKEELVDGSGQSNFTLELDFEPFNASFPRPSLSKSIGNGVQFLNRHLSSKLFHDKESMYPLLNFLKEHHYNGTSMMLNDRIQTLGALQASLRRADEYVLSLPLDTPYSDFGHRFQELGLEKGWGDNAKRVHENLHLLLDLLEAPDPCTLENFLGTIPMVFNVVILSPHGYFAQANVLGYPDTGGQVVYILDQVRAMESEMLLRIKQQGLDITPRILIVTRLLPDAVGTTCGQRLEKVLGTEHTHILRVPFRTEHGILRKWISRFEVWPYLETYAEDVANEVAGELQATPDLIIGNYSDGNLVASLMAHKLGVTQCTIAHALEKTKYPNSDLYWKKFEKQYHFSCQFTADLIAMNHADFIITSTFQEIAGSKDTVGQYESHTGFTLPGLYRVVHGIDVFDPKFNIVSPGADMSIYFPYTEAEKRLTALHPEIEELLYSSAESTEYKFGLKDKTKPIIFSMARLDRVKNMTGLVELYAKNDRLKELVNLVVVCGDHAKASKDLEEQAELKKMYSLIEEYKLDGHIRWISAQMNRVRNGELYRYIADSKGVFVQPAFYEAFGLTVVESMTCGLPTFATCHGGPAEIIVHGVSGYHIDPYHGDKAAELLVDFFEKSKKDQTHWDAISNGGLKRIYEKYTWKIYSERLLTLAGVYGFWKYVSNLDRRETKRYLEMFYALKYRNLAKSVPLAVDGEAAVNGKICTLGC.

The segment at 276-753 (MVFNVVILSP…GLKRIYEKYT (478 aa)) is GT-B glycosyltransferase.

It belongs to the glycosyltransferase 1 family. Plant sucrose synthase subfamily.

It catalyses the reaction an NDP-alpha-D-glucose + D-fructose = a ribonucleoside 5'-diphosphate + sucrose + H(+). Its function is as follows. Sucrose-cleaving enzyme that provides UDP-glucose and fructose for various metabolic pathways. This is Sucrose synthase 2 from Tulipa gesneriana (Garden tulip).